Reading from the N-terminus, the 201-residue chain is Charged multivesicular body protein 6 (201 aa).

A lipid anchor (N-myristoyl glycine) is attached at Gly2. Positions 10 to 145 (QSRVTEQDKA…YQRQIDELLA (136 aa)) form a coiled coil. Ser119 carries the phosphoserine modification. Thr130 carries the post-translational modification Phosphothreonine. A Type-2 MIT-interacting motif motif is present at residues 168 to 179 (IELPEVPSEPLP). An interaction with VPS4A region spans residues 170–181 (LPEVPSEPLPEK).

It belongs to the SNF7 family. Probable core component of the endosomal sorting required for transport complex III (ESCRT-III). ESCRT-III components are thought to multimerize to form a flat lattice on the perimeter membrane of the endosome. Several assembly forms of ESCRT-III may exist that interact and act sequentially. Interacts with VPS4A; the interaction is direct. Interacts with VPS4B; the interaction is direct. Interacts with CHMP4A, CHMP4B and CHMP4C. Interacts with SNF8, VPS25 and VPS36. ISGylated in a CHMP5-dependent manner. Isgylation weakens its interaction with VPS4A. Ubiquitously expressed.

The protein localises to the endomembrane system. Its subcellular location is the endosome membrane. The protein resides in the late endosome membrane. It is found in the membrane. Its function is as follows. Probable core component of the endosomal sorting required for transport complex III (ESCRT-III) which is involved in multivesicular bodies (MVBs) formation and sorting of endosomal cargo proteins into MVBs. MVBs contain intraluminal vesicles (ILVs) that are generated by invagination and scission from the limiting membrane of the endosome and mostly are delivered to lysosomes enabling degradation of membrane proteins, such as stimulated growth factor receptors, lysosomal enzymes and lipids. The MVB pathway appears to require the sequential function of ESCRT-O, -I,-II and -III complexes. ESCRT-III proteins mostly dissociate from the invaginating membrane before the ILV is released. The ESCRT machinery also functions in topologically equivalent membrane fission events, such as the terminal stages of cytokinesis and the budding of enveloped viruses (HIV-1 and other lentiviruses). ESCRT-III proteins are believed to mediate the necessary vesicle extrusion and/or membrane fission activities, possibly in conjunction with the AAA ATPase VPS4. In the ESCRT-III complex, it probably serves as an acceptor for the ESCRT-II complex on endosomal membranes. This Homo sapiens (Human) protein is Charged multivesicular body protein 6 (CHMP6).